The chain runs to 92 residues: Small ribosomal subunit protein uS19 (92 aa).

This sequence belongs to the universal ribosomal protein uS19 family.

Functionally, protein S19 forms a complex with S13 that binds strongly to the 16S ribosomal RNA. This Nitrobacter winogradskyi (strain ATCC 25391 / DSM 10237 / CIP 104748 / NCIMB 11846 / Nb-255) protein is Small ribosomal subunit protein uS19.